Reading from the N-terminus, the 597-residue chain is Arginine--tRNA ligase (597 aa).

A 'HIGH' region motif is present at residues 138 to 148; the sequence is ANPTGPMHVGH.

The protein belongs to the class-I aminoacyl-tRNA synthetase family. In terms of assembly, monomer.

It localises to the cytoplasm. It carries out the reaction tRNA(Arg) + L-arginine + ATP = L-arginyl-tRNA(Arg) + AMP + diphosphate. The sequence is that of Arginine--tRNA ligase from Rhodopseudomonas palustris (strain ATCC BAA-98 / CGA009).